Reading from the N-terminus, the 344-residue chain is UDP-3-O-acylglucosamine N-acyltransferase (344 aa).

The active-site Proton acceptor is the His-236.

This sequence belongs to the transferase hexapeptide repeat family. LpxD subfamily. As to quaternary structure, homotrimer.

It catalyses the reaction a UDP-3-O-[(3R)-3-hydroxyacyl]-alpha-D-glucosamine + a (3R)-hydroxyacyl-[ACP] = a UDP-2-N,3-O-bis[(3R)-3-hydroxyacyl]-alpha-D-glucosamine + holo-[ACP] + H(+). The protein operates within bacterial outer membrane biogenesis; LPS lipid A biosynthesis. Functionally, catalyzes the N-acylation of UDP-3-O-acylglucosamine using 3-hydroxyacyl-ACP as the acyl donor. Is involved in the biosynthesis of lipid A, a phosphorylated glycolipid that anchors the lipopolysaccharide to the outer membrane of the cell. The sequence is that of UDP-3-O-acylglucosamine N-acyltransferase from Nitratidesulfovibrio vulgaris (strain ATCC 29579 / DSM 644 / CCUG 34227 / NCIMB 8303 / VKM B-1760 / Hildenborough) (Desulfovibrio vulgaris).